A 440-amino-acid chain; its full sequence is L-gulonolactone oxidase (440 aa).

Residues 17–187 (YGCSPEMYYQ…LTVTLQCVPQ (171 aa)) form the FAD-binding PCMH-type domain. H54 carries the post-translational modification Pros-8alpha-FAD histidine. The helical transmembrane segment at 251 to 273 (IGFYLLEFLLWTSTYLPRLVGWI) threads the bilayer.

The protein belongs to the oxygen-dependent FAD-linked oxidoreductase family. Requires FAD as cofactor. In terms of tissue distribution, highly expressed in liver.

The protein localises to the microsome membrane. The protein resides in the endoplasmic reticulum membrane. The enzyme catalyses L-gulono-1,4-lactone + O2 = L-ascorbate + H2O2 + H(+). It functions in the pathway cofactor biosynthesis; L-ascorbate biosynthesis via UDP-alpha-D-glucuronate pathway; L-ascorbate from UDP-alpha-D-glucuronate: step 4/4. In terms of biological role, oxidizes L-gulono-1,4-lactone to hydrogen peroxide and L-xylo-hexulonolactone which spontaneously isomerizes to L-ascorbate. The sequence is that of L-gulonolactone oxidase (Gulo) from Mus musculus (Mouse).